The chain runs to 141 residues: Large-conductance mechanosensitive channel (141 aa).

The next 3 membrane-spanning stretches (helical) occupy residues 16–36 (VIDL…VDSV), 40–60 (LIMP…MFIV), and 86–106 (GNFL…FLMV).

It belongs to the MscL family. As to quaternary structure, homopentamer.

The protein localises to the cell inner membrane. Channel that opens in response to stretch forces in the membrane lipid bilayer. May participate in the regulation of osmotic pressure changes within the cell. The sequence is that of Large-conductance mechanosensitive channel from Cupriavidus necator (strain ATCC 17699 / DSM 428 / KCTC 22496 / NCIMB 10442 / H16 / Stanier 337) (Ralstonia eutropha).